A 349-amino-acid polypeptide reads, in one-letter code: Protein-glutamate methylesterase/protein-glutamine glutaminase (349 aa).

In terms of domain architecture, Response regulatory spans 5-122; the sequence is RVLSVDDSAL…REGMLAYSEM (118 aa). 4-aspartylphosphate is present on aspartate 56. One can recognise a CheB-type methylesterase domain in the interval 152-344; that stretch reads LLSSEKLIAI…QQMLATISAG (193 aa). Residues serine 164, histidine 190, and aspartate 286 contribute to the active site.

The protein belongs to the CheB family. Phosphorylated by CheA. Phosphorylation of the N-terminal regulatory domain activates the methylesterase activity.

Its subcellular location is the cytoplasm. It carries out the reaction [protein]-L-glutamate 5-O-methyl ester + H2O = L-glutamyl-[protein] + methanol + H(+). The catalysed reaction is L-glutaminyl-[protein] + H2O = L-glutamyl-[protein] + NH4(+). Its function is as follows. Involved in chemotaxis. Part of a chemotaxis signal transduction system that modulates chemotaxis in response to various stimuli. Catalyzes the demethylation of specific methylglutamate residues introduced into the chemoreceptors (methyl-accepting chemotaxis proteins or MCP) by CheR. Also mediates the irreversible deamidation of specific glutamine residues to glutamic acid. The protein is Protein-glutamate methylesterase/protein-glutamine glutaminase of Shigella flexneri.